A 167-amino-acid chain; its full sequence is 2-C-methyl-D-erythritol 2,4-cyclodiphosphate synthase (167 aa).

A divalent metal cation-binding residues include D11 and H13. 4-CDP-2-C-methyl-D-erythritol 2-phosphate-binding positions include 11-13 (DIH) and 37-38 (HS). Residue H45 participates in a divalent metal cation binding. 4-CDP-2-C-methyl-D-erythritol 2-phosphate is bound by residues 59-61 (DIG), 64-68 (FSDTD), 103-109 (AQAPKMA), and R145.

It belongs to the IspF family. In terms of assembly, homotrimer. The cofactor is a divalent metal cation.

It catalyses the reaction 4-CDP-2-C-methyl-D-erythritol 2-phosphate = 2-C-methyl-D-erythritol 2,4-cyclic diphosphate + CMP. It participates in isoprenoid biosynthesis; isopentenyl diphosphate biosynthesis via DXP pathway; isopentenyl diphosphate from 1-deoxy-D-xylulose 5-phosphate: step 4/6. Its function is as follows. Involved in the biosynthesis of isopentenyl diphosphate (IPP) and dimethylallyl diphosphate (DMAPP), two major building blocks of isoprenoid compounds. Catalyzes the conversion of 4-diphosphocytidyl-2-C-methyl-D-erythritol 2-phosphate (CDP-ME2P) to 2-C-methyl-D-erythritol 2,4-cyclodiphosphate (ME-CPP) with a corresponding release of cytidine 5-monophosphate (CMP). The polypeptide is 2-C-methyl-D-erythritol 2,4-cyclodiphosphate synthase (Nitrosomonas eutropha (strain DSM 101675 / C91 / Nm57)).